A 218-amino-acid polypeptide reads, in one-letter code: uncharacterized protein (218 aa).

5 helical membrane passes run Ile-27–Ala-49, Gly-57–Val-77, Val-115–Val-135, Phe-142–Tyr-162, and Phe-180–Phe-200.

It belongs to the DedA family.

It localises to the cell membrane. This is an uncharacterized protein from Synechocystis sp. (strain ATCC 27184 / PCC 6803 / Kazusa).